Reading from the N-terminus, the 295-residue chain is Pyrroline-5-carboxylate reductase (295 aa).

It belongs to the pyrroline-5-carboxylate reductase family.

It is found in the cytoplasm. The enzyme catalyses L-proline + NADP(+) = (S)-1-pyrroline-5-carboxylate + NADPH + 2 H(+). The catalysed reaction is L-proline + NAD(+) = (S)-1-pyrroline-5-carboxylate + NADH + 2 H(+). It participates in amino-acid biosynthesis; L-proline biosynthesis; L-proline from L-glutamate 5-semialdehyde: step 1/1. Catalyzes the reduction of 1-pyrroline-5-carboxylate (PCA) to L-proline. The protein is Pyrroline-5-carboxylate reductase of Mycobacterium tuberculosis (strain CDC 1551 / Oshkosh).